A 251-amino-acid chain; its full sequence is Glucosamine-6-phosphate deaminase (251 aa).

Residue aspartate 67 is the Proton acceptor; for enolization step of the active site. Catalysis depends on asparagine 136, which acts as the For ring-opening step. Histidine 138 functions as the Proton acceptor; for ring-opening step in the catalytic mechanism. The active-site For ring-opening step is the glutamate 143.

This sequence belongs to the glucosamine/galactosamine-6-phosphate isomerase family. NagB subfamily.

It catalyses the reaction alpha-D-glucosamine 6-phosphate + H2O = beta-D-fructose 6-phosphate + NH4(+). The protein operates within amino-sugar metabolism; N-acetylneuraminate degradation; D-fructose 6-phosphate from N-acetylneuraminate: step 5/5. Functionally, catalyzes the reversible isomerization-deamination of glucosamine 6-phosphate (GlcN6P) to form fructose 6-phosphate (Fru6P) and ammonium ion. This Geobacillus sp. (strain WCH70) protein is Glucosamine-6-phosphate deaminase.